The following is a 365-amino-acid chain: tRNA-specific 2-thiouridylase MnmA (365 aa).

Residues 14–21 (AMSGGVDS) and Leu-40 each bind ATP. Residue Cys-108 is the Nucleophile of the active site. An intrachain disulfide couples Cys-108 to Cys-204. Gly-132 contributes to the ATP binding site. The segment at 154 to 156 (KDQ) is interaction with tRNA. Cys-204 acts as the Cysteine persulfide intermediate in catalysis.

This sequence belongs to the MnmA/TRMU family.

Its subcellular location is the cytoplasm. It carries out the reaction S-sulfanyl-L-cysteinyl-[protein] + uridine(34) in tRNA + AH2 + ATP = 2-thiouridine(34) in tRNA + L-cysteinyl-[protein] + A + AMP + diphosphate + H(+). Its function is as follows. Catalyzes the 2-thiolation of uridine at the wobble position (U34) of tRNA, leading to the formation of s(2)U34. This chain is tRNA-specific 2-thiouridylase MnmA, found in Rickettsia africae (strain ESF-5).